The following is a 141-amino-acid chain: Nucleoside diphosphate kinase (141 aa).

ATP contacts are provided by Lys-11, Phe-59, Arg-87, Thr-93, Arg-104, and Asn-114. Residue His-117 is the Pros-phosphohistidine intermediate of the active site.

The protein belongs to the NDK family. Homotetramer. Mg(2+) serves as cofactor.

The protein resides in the cytoplasm. The catalysed reaction is a 2'-deoxyribonucleoside 5'-diphosphate + ATP = a 2'-deoxyribonucleoside 5'-triphosphate + ADP. It carries out the reaction a ribonucleoside 5'-diphosphate + ATP = a ribonucleoside 5'-triphosphate + ADP. In terms of biological role, major role in the synthesis of nucleoside triphosphates other than ATP. The ATP gamma phosphate is transferred to the NDP beta phosphate via a ping-pong mechanism, using a phosphorylated active-site intermediate. The protein is Nucleoside diphosphate kinase of Proteus mirabilis (strain HI4320).